The chain runs to 203 residues: Superoxide dismutase [Mn/Fe] (203 aa).

Fe(3+)-binding residues include H27, H81, D163, and H167. Residues H27, H81, D163, and H167 each contribute to the Mn(2+) site.

The protein belongs to the iron/manganese superoxide dismutase family. Requires Mn(2+) as cofactor. The cofactor is Fe(3+).

It catalyses the reaction 2 superoxide + 2 H(+) = H2O2 + O2. Its function is as follows. Destroys superoxide anion radicals which are normally produced within the cells and which are toxic to biological systems. Catalyzes the dismutation of superoxide anion radicals into O2 and H2O2 by successive reduction and oxidation of the transition metal ion at the active site. This chain is Superoxide dismutase [Mn/Fe] (sodA), found in Streptococcus mutans serotype c (strain ATCC 700610 / UA159).